A 119-amino-acid chain; its full sequence is Centrocin 1 (119 aa).

The signal sequence occupies residues 1–20 (MMIKIAVVLCAVMATTMVRA). Positions 21-50 (KYVEEQELADLLDLLISEEVSSPDDAVALQ) are excised as a propeptide. 6'-bromotryptophan occurs at positions 52 and 53. Cys-75 and Cys-110 are disulfide-bonded. A propeptide spanning residues 81–104 (SPQEARAKVLEAFPEMKEADLDEE) is cleaved from the precursor. Position 117 is an asparagine amide (Asn-117).

As to quaternary structure, heterodimer of a light and a heavy chain, probably disulfide-linked.

Its function is as follows. Has antimicrobial activity against Gram-negative bacteria, Gram-positive bacteria and against fungi with minimum inhibitory concentration (MIC) between 0.78 uM and 50 uM. Shows little hemolytic activity even at a concentration of 100 uM. In terms of biological role, has no antimicrobial activity. Shows no hemolytic activity. The chain is Centrocin 1 from Echinus esculentus (Sea urchin).